Reading from the N-terminus, the 240-residue chain is Biosynthetic peptidoglycan transglycosylase (240 aa).

Residues 15 to 35 form a helical membrane-spanning segment; the sequence is WMFYLGAVVAIAWLATQAFYF.

The protein belongs to the glycosyltransferase 51 family.

It localises to the cell inner membrane. The enzyme catalyses [GlcNAc-(1-&gt;4)-Mur2Ac(oyl-L-Ala-gamma-D-Glu-L-Lys-D-Ala-D-Ala)](n)-di-trans,octa-cis-undecaprenyl diphosphate + beta-D-GlcNAc-(1-&gt;4)-Mur2Ac(oyl-L-Ala-gamma-D-Glu-L-Lys-D-Ala-D-Ala)-di-trans,octa-cis-undecaprenyl diphosphate = [GlcNAc-(1-&gt;4)-Mur2Ac(oyl-L-Ala-gamma-D-Glu-L-Lys-D-Ala-D-Ala)](n+1)-di-trans,octa-cis-undecaprenyl diphosphate + di-trans,octa-cis-undecaprenyl diphosphate + H(+). Its pathway is cell wall biogenesis; peptidoglycan biosynthesis. In terms of biological role, peptidoglycan polymerase that catalyzes glycan chain elongation from lipid-linked precursors. This chain is Biosynthetic peptidoglycan transglycosylase, found in Paraburkholderia xenovorans (strain LB400).